Here is an 86-residue protein sequence, read N- to C-terminus: Neurotoxin-like protein pMD18-NTL1/2/4/5 (86 aa).

A signal peptide spans 1 to 21; sequence MKTLLLTLVVLTIACLDLGYT. Cystine bridges form between Cys24–Cys45, Cys38–Cys62, Cys66–Cys78, and Cys79–Cys84.

It belongs to the three-finger toxin family. Short-chain subfamily. Orphan group IX sub-subfamily. As to expression, expressed by the venom gland.

It is found in the secreted. This Bungarus multicinctus (Many-banded krait) protein is Neurotoxin-like protein pMD18-NTL1/2/4/5.